Consider the following 703-residue polypeptide: Metastasis-associated protein MTA1 (703 aa).

Residues 1-164 (MAANMYRVGD…PQQKTLLADK (164 aa)) enclose the BAH domain. The ELM2 domain maps to 165-276 (GEIRVGNRYQ…KAISALVPQG (112 aa)). A Glycyl lysine isopeptide (Lys-Gly) (interchain with G-Cter in ubiquitin) cross-link involves residue lysine 182. Positions 283 to 335 (DEMEEWSASEANLFEEALEKYGKDFTDIQQDFLPWKSLTSIIEYYYMWKTTDR) constitute an SANT domain. Residue serine 386 is modified to Phosphoserine. The GATA-type; atypical zinc-finger motif lies at 393 to 420 (CESCYTTQSYQWYSWGPPNMQCRLCASC). Residues 437–460 (DGERPGPNRNNMSPHGIPARSSGS) are disordered. Serine 449 is modified (phosphoserine). A Glycyl lysine isopeptide (Lys-Gly) (interchain with G-Cter in SUMO2 and SUMO3) cross-link involves residue lysine 509. At serine 522 the chain carries Phosphoserine. Residues 542 to 552 (ETHPRPPKPDP) are compositionally biased toward basic and acidic residues. The tract at residues 542–583 (ETHPRPPKPDPVKSSSSVLSSLTPAKSAPVINNGSPTILGKR) is disordered. Positions 545–552 (PRPPKPDP) match the SH3-binding motif. Lysine 549 participates in a covalent cross-link: Glycyl lysine isopeptide (Lys-Gly) (interchain with G-Cter in SUMO2). A compositionally biased stretch (low complexity) spans 553-565 (VKSSSSVLSSLTP). At threonine 564 the chain carries Phosphothreonine. Serine 576 carries the phosphoserine modification. Threonine 578 bears the Phosphothreonine mark. Lysine 614 bears the N6-acetyllysine; alternate mark. Residue lysine 614 forms a Glycyl lysine isopeptide (Lys-Gly) (interchain with G-Cter in ubiquitin); alternate linkage. Phosphoserine is present on serine 627. Residues 644-674 (DVFYMATEETRKIRKLLSSSETKRAARRPYK) form an interaction with RBBP4 region. The interval 661–703 (SSSETKRAARRPYKPIALRQSQALPLRPPPPAPVNDEPIVIED) is disordered. Residues 684 to 693 (LPLRPPPPAP) carry the SH3-binding motif. An SUMO interaction motif 1 (SIM); crucial for efficient sumoylation motif is present at residues 699–703 (IVIED).

Belongs to the metastasis-associated protein family. As to quaternary structure, component of the nucleosome remodeling and deacetylase (NuRD) repressor complex, composed of core proteins MTA1, MTA2, MTA3, RBBP4, RBBP7, HDAC1, HDAC2, MBD2, MBD3, and peripherally associated proteins CDK2AP1, CDK2AP2, GATAD2A, GATAD2B, CHD3, CHD4 and CHD5. The exact stoichiometry of the NuRD complex is unknown, and some subunits such as MBD2 and MBD3, GATAD2A and GATAD2B, and CHD3, CHD4 and CHD5 define mutually exclusive NuRD complexes. Interacts with RBBP4; the interaction is direct. Interacts with BMAL1. Interacts with CLOCK. Interacts with COP1. Interacts with CSNK1G2 in the cytoplasm. Interacts with EP300. Interacts with HDAC2. Interacts with ITGB3BP/CENPR. Interacts with MBD3L2. Interacts with MDM2. Interacts with NACC2. Interacts with p53/TP53. Interacts with PIAS1. Interacts with PIAS3. Interacts with PIAS4. Interacts with PWWP2A. Interacts with PWWP2B. Interacts with SENP1. Interacts with SENP2. Interacts with SIX3; facilitates the binding of SIX3 to the core DNA motif of SIX3 promoter. Interacts with SUMO1. Interacts with SUMO2. Interacts with TFCP2L1; which is indispensable for TFCP2L1-mediated self-renewal-promoting effect and endoderm-inhibiting action. Interacts with TFAP2C. Interacts with TPR. Interacts with UBE2I/UBC9. Post-translationally, phosphorylation by CSNK1G2/CK1 triggered by estrogen enhances corepression of estrogen receptor (ER). Acetylation is essential for its transcriptional coactivator activity. In terms of processing, sumoylation positively regulates its transcriptional corepressor activity but does not affect the protein stability. Sumoylated preferentially by SUMO2 or SUMO3 than SUMO1. Sumoylation is enhanced by PIAS1/3/4 and preferentially sumoylated by SUMO2 in the presence of PIAS1/3/4. Desumoylated by SENP1. Post-translationally, ubiquitinated by COP1, which leads to proteasomal degradation. Isoform 1 abundant in testis and expressed at low levels in brain, heart, lung, liver, and kidney. Isoform 2 abundant in adrenal gland, brain, colon, heart, liver, lung, muscle, prostate, stomach, testis, and thymus and expressed at low levels in duodenum, kidney, pancreas, parotid, and spleen.

It is found in the nucleus. The protein resides in the nucleus envelope. The protein localises to the cytoplasm. Its subcellular location is the cytoskeleton. It localises to the rough endoplasmic reticulum. It is found in the golgi apparatus. The protein resides in the zymogen granule. In terms of biological role, transcriptional coregulator which can act as both a transcriptional corepressor and coactivator. Acts as a component of the histone deacetylase NuRD complex which participates in the remodeling of chromatin. In the NuRD complex, regulates transcription of its targets by modifying the acetylation status of the target chromatin and cofactor accessibility to the target DNA. In conjunction with other components of NuRD, acts as a transcriptional corepressor of BRCA1, ESR1, TFF1 and CDKN1A. Acts as a transcriptional coactivator of BCAS3, and SUMO2, independent of the NuRD complex. Stimulates the expression of WNT1 by inhibiting the expression of its transcriptional corepressor SIX3. Regulates p53-dependent and -independent DNA repair processes following genotoxic stress. Regulates the stability and function of p53/TP53 by inhibiting its ubiquitination by COP1 and MDM2 thereby regulating the p53-dependent DNA repair. Plays a role in the regulation of the circadian clock and is essential for the generation and maintenance of circadian rhythms under constant light and for normal entrainment of behavior to light-dark (LD) cycles. Positively regulates the CLOCK-BMAL1 heterodimer mediated transcriptional activation of its own transcription and the transcription of CRY1. Regulates deacetylation of BMAL1 by regulating SIRT1 expression, resulting in derepressing CRY1-mediated transcription repression. With TFCP2L1, promotes establishment and maintenance of pluripotency in embryonic stem cells (ESCs) and inhibits endoderm differentiation. The protein is Metastasis-associated protein MTA1 (Mta1) of Rattus norvegicus (Rat).